The following is a 133-amino-acid chain: MSEKVQKSEHEWQQQLTPEQYRVTREKGTERPFTGDYQVSDEQGIYHCVCCGAPLFENEHKFDAGCGWPSFDRPLADASIEEHLDTSHGMRRIEVTCRRCDSHLGHVFPDGPQDTTGLRYCINSVSLDFHPGE.

Residues 1-12 (MSEKVQKSEHEW) show a composition bias toward basic and acidic residues. A disordered region spans residues 1–36 (MSEKVQKSEHEWQQQLTPEQYRVTREKGTERPFTGD). The MsrB domain maps to 9–132 (EHEWQQQLTP…NSVSLDFHPG (124 aa)). Zn(2+) is bound by residues Cys48, Cys51, Cys97, and Cys100. Cys121 acts as the Nucleophile in catalysis.

It belongs to the MsrB Met sulfoxide reductase family. The cofactor is Zn(2+).

The enzyme catalyses L-methionyl-[protein] + [thioredoxin]-disulfide + H2O = L-methionyl-(R)-S-oxide-[protein] + [thioredoxin]-dithiol. The chain is Peptide methionine sulfoxide reductase MsrB from Chromohalobacter salexigens (strain ATCC BAA-138 / DSM 3043 / CIP 106854 / NCIMB 13768 / 1H11).